The sequence spans 96 residues: Small ribosomal subunit protein bS6c (96 aa).

The protein belongs to the bacterial ribosomal protein bS6 family.

Its subcellular location is the plastid. It is found in the chloroplast. In terms of biological role, binds together with bS18 to 16S ribosomal RNA. This is Small ribosomal subunit protein bS6c (rps6) from Guillardia theta (Cryptophyte).